A 113-amino-acid chain; its full sequence is Large ribosomal subunit protein bL17 (113 aa).

Belongs to the bacterial ribosomal protein bL17 family. Part of the 50S ribosomal subunit. Contacts protein L32.

The sequence is that of Large ribosomal subunit protein bL17 from Caldicellulosiruptor bescii (strain ATCC BAA-1888 / DSM 6725 / KCTC 15123 / Z-1320) (Anaerocellum thermophilum).